The sequence spans 338 residues: Methionine import ATP-binding protein MetN 1 (338 aa).

One can recognise an ABC transporter domain in the interval 2–241 (IEVRSVTKRF…PHSELGVGLL (240 aa)). 38 to 45 (GQSGAGKT) contacts ATP.

It belongs to the ABC transporter superfamily. Methionine importer (TC 3.A.1.24) family. As to quaternary structure, the complex is composed of two ATP-binding proteins (MetN), two transmembrane proteins (MetI) and a solute-binding protein (MetQ).

It is found in the cell membrane. The enzyme catalyses L-methionine(out) + ATP + H2O = L-methionine(in) + ADP + phosphate + H(+). It carries out the reaction D-methionine(out) + ATP + H2O = D-methionine(in) + ADP + phosphate + H(+). Its function is as follows. Part of the ABC transporter complex MetNIQ involved in methionine import. Responsible for energy coupling to the transport system. The polypeptide is Methionine import ATP-binding protein MetN 1 (Rhodococcus jostii (strain RHA1)).